A 296-amino-acid polypeptide reads, in one-letter code: uncharacterized protein (296 aa).

The 60-residue stretch at M1–T60 folds into the HTH lysR-type domain. A DNA-binding region (H-T-H motif) is located at residues F20–S39.

This sequence belongs to the LysR transcriptional regulatory family.

This is an uncharacterized protein from Methanocaldococcus jannaschii (strain ATCC 43067 / DSM 2661 / JAL-1 / JCM 10045 / NBRC 100440) (Methanococcus jannaschii).